The sequence spans 403 residues: MVLITQLGAALAVFSALTVAAPTKGKARFSAPQVGIPKKAKHHPAAAYARALHKFGMKIPKAVSDAAKGSVPTTPTQNDEQYVTQVTVGGSTLNLDLDTGSADLWVFSTETPQDESQGHNIYKPSSGAKRLDGYSWEIKYGDSSSAHGDVFLDTVTVGGVTTSSQAVESAKEVSSQFVKDKATDGLMGLSFSVLNTVQPQPQKTFFDNVLSQLEQPLFTCTLKHGEPGTYDFGYIDDSKHTGEIAYTQVDNSNGWWGFTADGYSIGGGSNSSYSLYGAQHKRANGGSISGIADTGTTLMLLSDDVVGDYYQNVQGATQDQMQGGWVFPCDANLPDFILNIGGYNAVVPGKFMNFQEIDNSMCFGGLQSSGGGSTPNIFGDVFLKSQFVVWDTQGPRIGFAPQA.

Positions 1 to 20 (MVLITQLGAALAVFSALTVA) are cleaved as a signal peptide. Positions 21–67 (APTKGKARFSAPQVGIPKKAKHHPAAAYARALHKFGMKIPKAVSDAA) are cleaved as a propeptide — activation peptide. The Peptidase A1 domain maps to 82 to 400 (YVTQVTVGGS…DTQGPRIGFA (319 aa)). The active site involves Asp98. Asn270 carries N-linked (GlcNAc...) asparagine glycosylation. Asp293 is a catalytic residue. Residues Cys329 and Cys362 are joined by a disulfide bond.

Belongs to the peptidase A1 family. In terms of assembly, monomer.

It localises to the secreted. Secreted aspartic endopeptidase that allows assimilation of proteinaceous substrates. The scissile peptide bond is attacked by a nucleophilic water molecule activated by two aspartic residues in the active site. Shows a broad primary substrate specificity. Favors hydrophobic residues at the P1 and P1' positions. The polypeptide is Aspartic protease pepA (Arthroderma gypseum (strain ATCC MYA-4604 / CBS 118893) (Microsporum gypseum)).